Here is a 462-residue protein sequence, read N- to C-terminus: Arginine-specific demethylase JMJ20 (462 aa).

Positions 115–287 constitute a JmjC domain; sequence VKEYPDYTAY…WVWDLLWKDY (173 aa). Residues His-177, Asp-179, and His-255 each coordinate Fe cation.

This sequence belongs to the JARID1 histone demethylase family. Fe(2+) is required as a cofactor. In terms of tissue distribution, mostly expressed in leaves, and, to a lower extent, in inflorescences, roots, siliques and stems.

It is found in the nucleus. It carries out the reaction N(omega),N(omega)-dimethyl-L-arginyl-[protein] + 2-oxoglutarate + O2 = N(omega)-methyl-L-arginyl-[protein] + formaldehyde + succinate + CO2. In terms of biological role, histone demethylase that demethylates 'Arg-3' (H4R3me) of histone H4 with a specific activity for H4R3me2. Involved in the positive regulation of gene expression. Together with JMJ22, positively regulates seed germination by promoting the removal of repressive histone arginine methylations (e.g. H4R3me2) at GA3ox1 and GA3ox2 to trigger gibberellic acid (GA) biosynthesis. In Arabidopsis thaliana (Mouse-ear cress), this protein is Arginine-specific demethylase JMJ20.